The sequence spans 350 residues: MKNKKRVLIASSLSCAILLLSAATTQANSAHKDSQDQNKKEHVDKSQQKEKRNVTNKDKNSTVPDDIGKNGKITKRTETVYDEKTNILQNLQFDFIDDPTYDKNVLLVKKQGSIHSNLKFESHKEEKNSNWLKYPSEYHVDFQVKRNPKTEILDQLPKNKISTAKVDSTFSYSSGGKFDSTKGIGRTSSNSYSKTISYNQQNYDTIASGKNNNWHVHWSVIANDLKYGGEVKNRNDELLFYRNTRIATVENPELSFASKYRYPALVRSGFNPEFLTYLSNEKSNEKTQFEVTYTRNQDILKNRPGIHYAPPILEKNKEGQRLIVTYEVDWKNKTVKVVDKYSDNKSFREG.

The N-terminal stretch at 1–27 (MKNKKRVLIASSLSCAILLLSAATTQA) is a signal peptide. Positions 28–71 (NSAHKDSQDQNKKEHVDKSQQKEKRNVTNKDKNSTVPDDIGKNG) are disordered. Basic and acidic residues predominate over residues 30–60 (AHKDSQDQNKKEHVDKSQQKEKRNVTNKDKN).

The protein belongs to the aerolysin family.

This is an uncharacterized protein from Staphylococcus aureus (strain MSSA476).